The sequence spans 189 residues: dCTP deaminase, dUMP-forming (189 aa).

DCTP is bound by residues 101-106, aspartate 119, 127-129, glutamine 148, tyrosine 162, and glutamine 174; these read KSSLGR and TLE. Glutamate 129 (proton donor/acceptor) is an active-site residue.

It belongs to the dCTP deaminase family. In terms of assembly, homotrimer.

The catalysed reaction is dCTP + 2 H2O = dUMP + NH4(+) + diphosphate. The protein operates within pyrimidine metabolism; dUMP biosynthesis; dUMP from dCTP: step 1/1. Its function is as follows. Bifunctional enzyme that catalyzes both the deamination of dCTP to dUTP and the hydrolysis of dUTP to dUMP without releasing the toxic dUTP intermediate. The protein is dCTP deaminase, dUMP-forming of Rhodococcus opacus (strain B4).